We begin with the raw amino-acid sequence, 480 residues long: Cyclin L homolog cyl-1 (480 aa).

Residues 25–58 (PKEQNGNVEPKKEEDEKFESTYKQNENTQITPSS) form a disordered region. The span at 33–44 (EPKKEEDEKFES) shows a compositional bias: basic and acidic residues. Residues 45-58 (TYKQNENTQITPSS) are compositionally biased toward polar residues. Residues 91 to 230 (PSLVDGLSKE…RRILATLGFV (140 aa)) enclose the Cyclin N-terminal domain. Residues 368–480 (KMAPDGEKST…ESSTPPRSRR (113 aa)) are disordered. Composition is skewed to basic and acidic residues over residues 384-409 (KDSR…GKKE) and 418-442 (NDRD…DEKK). Basic residues predominate over residues 443-453 (DRRKRTRSRSR). The span at 454–472 (DRKDKNRNRDVGKRYRKES) shows a compositional bias: basic and acidic residues.

This sequence belongs to the cyclin family.

Involved in pre-mRNA splicing. Functions in association with cyclin-dependent kinases (CDKs). Involved in induction of expression of heat shock protein hsp-16.2 in response to heat shock. Plays a role in male tail development, perhaps acting together with cell cycle regulators cdc-25.2, cdk-1, cyb-3, and cyd-1. The protein is Cyclin L homolog cyl-1 of Caenorhabditis elegans.